The chain runs to 559 residues: MEDPKSDEKFDIGISEKNLDVGFGESSSVDVPVKGRFASFLKKLELSSGPEKENIDLRPTPPDRRHYSALDIIYLWSCNGISASAFRTGTSYMEMGLSPKQALAALIAGNVFIAMPMTLNGLFGSHYHIPFAVQSRASFGYYFNTLIILLRFIAGLFYYGTNVYTGAECVQTILYAIFKSFRSYKNRLPADAGITSDFLISYFVYWVISFPFHLIRPEYLQRFFLIKSISTYIACFAMLIFLLCNVGSHVVWDQPATVSGRSWSWVFMCALNSSVAGFSTLAVNVNDFTRYVKHPKTPYVQMLILPLVAAVSAPIGIVSGVASKIMYGTAMWDPLQIANNWTSRGGRAAAFFMGLTYLVSMIAQNISDNTVAAANDLLYFFPRYLDIRRAQVIVIIIGAWAIVPWKILQNGTAFLAFLGSLSIFLGPAAGIFVADKFKNHHKYDIDEFYNPSGIYRYNKLGLNWRALIAFLCACVPLIPGMAMSINPSITMPDGVIHLYYIGYFYSFMTAFLIYWGLNLVFPAKETLLEEAVYPPKSNAELVDPSTLSGKDKFWYYIDY.

The next 11 helical transmembrane spans lie at 103 to 123 (LAAL…NGLF), 139 to 159 (FGYY…LFYY), 192 to 212 (AGIT…SFPF), 223 to 243 (FFLI…IFLL), 263 to 283 (WSWV…TLAV), 302 to 322 (MLIL…SGVA), 348 to 368 (AAAF…NISD), 387 to 407 (IRRA…PWKI), 413 to 434 (AFLA…IFVA), 466 to 486 (ALIA…MSIN), and 501 to 521 (IGYF…NLVF).

It belongs to the purine-cytosine permease (2.A.39) family.

The protein localises to the golgi apparatus membrane. This is an uncharacterized protein from Schizosaccharomyces pombe (strain 972 / ATCC 24843) (Fission yeast).